A 114-amino-acid polypeptide reads, in one-letter code: Propane 2-monooxygenase, effector component (114 aa).

The protein belongs to the TmoD/XamoD family. In terms of assembly, the propane 2-monooxygenase multicomponent enzyme system is composed of an electron transfer component and a monooxygenase component interacting with the effector protein MimD. The electron transfer component is composed of a reductase (MimB), and the monooxygenase component is formed by a large subunit (MimA) and a small subunit (MimC).

In terms of biological role, effector component of the propane 2-monooxygenase multicomponent enzyme system which is involved in the degradation of propane via the O2-dependent hydroxylation of propane. This chain is Propane 2-monooxygenase, effector component, found in Mycolicibacterium smegmatis (strain ATCC 700084 / mc(2)155) (Mycobacterium smegmatis).